Reading from the N-terminus, the 251-residue chain is Probable transcriptional regulatory protein Blon_1155/BLIJ_1182 (251 aa).

This sequence belongs to the TACO1 family.

Its subcellular location is the cytoplasm. In Bifidobacterium longum subsp. infantis (strain ATCC 15697 / DSM 20088 / JCM 1222 / NCTC 11817 / S12), this protein is Probable transcriptional regulatory protein Blon_1155/BLIJ_1182.